A 252-amino-acid polypeptide reads, in one-letter code: Tricin synthase 1 (252 aa).

Residues Ser65, Glu87, 89 to 90 (GV), Ser95, and Asp113 contribute to the S-adenosyl-L-methionine site. Asp168 serves as a coordination point for a divalent metal cation. Asp170 contributes to the S-adenosyl-L-methionine binding site. A divalent metal cation is bound by residues Asp194 and Asn195.

This sequence belongs to the class I-like SAM-binding methyltransferase superfamily. Cation-dependent O-methyltransferase family. CCoAMT subfamily. The cofactor is Mg(2+). Requires Mn(2+) as cofactor. It depends on Co(2+) as a cofactor. As to expression, ubiquitous. Highest expression in stems and roots.

It localises to the nucleus. It carries out the reaction tricetin + 2 S-adenosyl-L-methionine = 3',5'-di-O-methyltricetin + 2 S-adenosyl-L-homocysteine + 2 H(+). Its function is as follows. Catalyzes the stepwise methylation of tricetin to its 3'-mono- and 3',5'-dimethyl ethers. No 3',4',5'-trimethylated ester derivatives are produced. Can use caffeoyl-CoA, 5-hydroxyferulic acid, luteolin, tricetin, quercetin, myrcetin and 7,8-dihydroxyflavone as substrates, but not naringenin, apigenin or kaempferol. The 2,3-double bond and the O-dihydroxyl group of the substrate are both required for catalytic activity of the enzyme. In Oryza sativa subsp. japonica (Rice), this protein is Tricin synthase 1 (ROMT-15).